The chain runs to 130 residues: Lysozyme C (130 aa).

A C-type lysozyme domain is found at Lys2–Leu130. Intrachain disulfides connect Cys7/Cys128, Cys31/Cys116, Cys65/Cys81, and Cys77/Cys95. Catalysis depends on residues Glu36 and Asp53.

It belongs to the glycosyl hydrolase 22 family. Monomer.

It localises to the secreted. The catalysed reaction is Hydrolysis of (1-&gt;4)-beta-linkages between N-acetylmuramic acid and N-acetyl-D-glucosamine residues in a peptidoglycan and between N-acetyl-D-glucosamine residues in chitodextrins.. Its function is as follows. Lysozymes have primarily a bacteriolytic function; those in tissues and body fluids are associated with the monocyte-macrophage system and enhance the activity of immunoagents. This Phasianus versicolor (Green pheasant) protein is Lysozyme C (LYZ).